Reading from the N-terminus, the 103-residue chain is Small ribosomal subunit protein uS10 (103 aa).

This sequence belongs to the universal ribosomal protein uS10 family. Part of the 30S ribosomal subunit.

Its function is as follows. Involved in the binding of tRNA to the ribosomes. This Vibrio cholerae serotype O1 (strain ATCC 39541 / Classical Ogawa 395 / O395) protein is Small ribosomal subunit protein uS10.